The chain runs to 250 residues: Tumor necrosis factor ligand superfamily member 13 (250 aa).

The propeptide occupies 1–104 (MPASSPFLLA…ENGERSRKRR (104 aa)). Disordered regions lie at residues 61–82 (EVSR…PWQS) and 89–108 (DALE…AVLT). The THD domain maps to 116 to 250 (SVLHLVPINA…HGTFLGFVKL (135 aa)). A glycan (N-linked (GlcNAc...) asparagine) is linked at N124. C196 and C211 are disulfide-bonded.

This sequence belongs to the tumor necrosis factor family. As to quaternary structure, homotrimer. Post-translationally, the precursor is cleaved by furin. In terms of tissue distribution, expressed at high levels in transformed cell lines, cancers of colon, thyroid, lymphoid tissues and specifically expressed in monocytes and macrophages.

The protein resides in the secreted. Cytokine that binds to TNFRSF13B/TACI and to TNFRSF17/BCMA. Plays a role in the regulation of tumor cell growth. May be involved in monocyte/macrophage-mediated immunological processes. This Homo sapiens (Human) protein is Tumor necrosis factor ligand superfamily member 13 (TNFSF13).